The primary structure comprises 653 residues: ATP-dependent zinc metalloprotease FtsH 1 (653 aa).

Topologically, residues methionine 1–serine 7 are cytoplasmic. The chain crosses the membrane as a helical span at residues alanine 8–proline 28. Over glycine 29 to glycine 105 the chain is Extracellular. A helical transmembrane segment spans residues tryptophan 106–leucine 126. Residues methionine 127–alanine 653 are Cytoplasmic-facing. Position 198 to 205 (glycine 198 to threonine 205) interacts with ATP. Histidine 420 contacts Zn(2+). Glutamate 421 is a catalytic residue. Histidine 424 and aspartate 496 together coordinate Zn(2+). A disordered region spans residues glutamate 603–alanine 653. Residues serine 611 to proline 620 are compositionally biased toward pro residues.

The protein in the central section; belongs to the AAA ATPase family. In the C-terminal section; belongs to the peptidase M41 family. In terms of assembly, homohexamer. Requires Zn(2+) as cofactor.

It is found in the cell membrane. Acts as a processive, ATP-dependent zinc metallopeptidase for both cytoplasmic and membrane proteins. Plays a role in the quality control of integral membrane proteins. This is ATP-dependent zinc metalloprotease FtsH 1 from Conexibacter woesei (strain DSM 14684 / CCUG 47730 / CIP 108061 / JCM 11494 / NBRC 100937 / ID131577).